A 303-amino-acid chain; its full sequence is Probable cell division protein WhiA (303 aa).

Residues 272–303 (SIQQVADALEFPITKSGVNHRLRKINKIADDL) constitute a DNA-binding region (H-T-H motif).

It belongs to the WhiA family.

Functionally, involved in cell division and chromosome segregation. This is Probable cell division protein WhiA from Streptococcus pyogenes serotype M12 (strain MGAS2096).